A 279-amino-acid polypeptide reads, in one-letter code: Phosphatidylglycerol--prolipoprotein diacylglyceryl transferase (279 aa).

3 helical membrane-spanning segments follow: residues 18 to 38 (LSVRWYGIIIAVGILLGYFVA), 55 to 75 (IIFYSALFGFIAARIYFVIFQ), and 89 to 109 (IWHGGIAIHGGLIGGFIAGVI). Residue R137 coordinates a 1,2-diacyl-sn-glycero-3-phospho-(1'-sn-glycerol). 2 consecutive transmembrane segments (helical) span residues 203 to 223 (LGETFFLYLTWYSIGRFFIEG) and 235 to 255 (IRVAQLVSILLILISISLIVY).

It belongs to the Lgt family.

Its subcellular location is the cell membrane. The catalysed reaction is L-cysteinyl-[prolipoprotein] + a 1,2-diacyl-sn-glycero-3-phospho-(1'-sn-glycerol) = an S-1,2-diacyl-sn-glyceryl-L-cysteinyl-[prolipoprotein] + sn-glycerol 1-phosphate + H(+). Its pathway is protein modification; lipoprotein biosynthesis (diacylglyceryl transfer). Its function is as follows. Catalyzes the transfer of the diacylglyceryl group from phosphatidylglycerol to the sulfhydryl group of the N-terminal cysteine of a prolipoprotein, the first step in the formation of mature lipoproteins. This Staphylococcus aureus (strain USA300) protein is Phosphatidylglycerol--prolipoprotein diacylglyceryl transferase.